The chain runs to 257 residues: Imidazole glycerol phosphate synthase subunit HisF (257 aa).

Residues D12 and D131 contribute to the active site.

This sequence belongs to the HisA/HisF family. As to quaternary structure, heterodimer of HisH and HisF.

It is found in the cytoplasm. It carries out the reaction 5-[(5-phospho-1-deoxy-D-ribulos-1-ylimino)methylamino]-1-(5-phospho-beta-D-ribosyl)imidazole-4-carboxamide + L-glutamine = D-erythro-1-(imidazol-4-yl)glycerol 3-phosphate + 5-amino-1-(5-phospho-beta-D-ribosyl)imidazole-4-carboxamide + L-glutamate + H(+). Its pathway is amino-acid biosynthesis; L-histidine biosynthesis; L-histidine from 5-phospho-alpha-D-ribose 1-diphosphate: step 5/9. IGPS catalyzes the conversion of PRFAR and glutamine to IGP, AICAR and glutamate. The HisF subunit catalyzes the cyclization activity that produces IGP and AICAR from PRFAR using the ammonia provided by the HisH subunit. This is Imidazole glycerol phosphate synthase subunit HisF from Burkholderia pseudomallei (strain 1106a).